Here is a 460-residue protein sequence, read N- to C-terminus: V-type ATP synthase beta chain (460 aa).

Belongs to the ATPase alpha/beta chains family.

Produces ATP from ADP in the presence of a proton gradient across the membrane. The V-type beta chain is a regulatory subunit. The chain is V-type ATP synthase beta chain from Clostridium perfringens (strain ATCC 13124 / DSM 756 / JCM 1290 / NCIMB 6125 / NCTC 8237 / Type A).